Consider the following 422-residue polypeptide: Elongation factor 1-alpha (422 aa).

Positions 5–221 (KPHMNLAVIG…NSLKEPEKPS (217 aa)) constitute a tr-type G domain. The segment at 14–21 (GHIDHGKS) is G1. 14-21 (GHIDHGKS) provides a ligand contact to GTP. Residue Ser21 participates in Mg(2+) binding. Positions 70–74 (GITID) are G2. A G3 region spans residues 91 to 94 (DCPG). GTP contacts are provided by residues 91–95 (DCPGH) and 146–149 (NKMD). The G4 stretch occupies residues 146–149 (NKMD). The G5 stretch occupies residues 185-187 (SAF).

It belongs to the TRAFAC class translation factor GTPase superfamily. Classic translation factor GTPase family. EF-Tu/EF-1A subfamily.

Its subcellular location is the cytoplasm. It catalyses the reaction GTP + H2O = GDP + phosphate + H(+). Its function is as follows. GTP hydrolase that promotes the GTP-dependent binding of aminoacyl-tRNA to the A-site of ribosomes during protein biosynthesis. This chain is Elongation factor 1-alpha, found in Methanosarcina mazei (strain ATCC BAA-159 / DSM 3647 / Goe1 / Go1 / JCM 11833 / OCM 88) (Methanosarcina frisia).